Consider the following 24-residue polypeptide: L-amino-acid oxidase (24 aa).

This sequence belongs to the flavin monoamine oxidase family. FIG1 subfamily. Homodimer; non-covalently linked. FAD is required as a cofactor. Post-translationally, N-glycosylated. Expressed by the venom gland.

Its subcellular location is the secreted. The catalysed reaction is an L-alpha-amino acid + O2 + H2O = a 2-oxocarboxylate + H2O2 + NH4(+). Its function is as follows. Catalyzes an oxidative deamination of predominantly hydrophobic and aromatic L-amino acids, thus producing hydrogen peroxide that may contribute to the diverse toxic effects of this enzyme. Exhibits diverse biological activities, such as hemorrhage, hemolysis, edema, apoptosis, and antiparasitic activities. This protein has antibacterial activity (against E.coli, S.aureus, and B.dysenteriae), cytotoxic activity, as well as an ability to induce platelet aggregation. Effects of snake L-amino oxidases on platelets are controversial, since they either induce aggregation or inhibit agonist-induced aggregation. These different effects are probably due to different experimental conditions. This Protobothrops mucrosquamatus (Taiwan habu) protein is L-amino-acid oxidase.